A 576-amino-acid polypeptide reads, in one-letter code: Acetylcholine receptor subunit alpha-like 2 (576 aa).

The first 21 residues, 1–21 (MAPGCCTTRPRPIALLAHIWR), serve as a signal peptide directing secretion. Over 22–261 (HCKPLCLLLV…FFNITLRRKT (240 aa)) the chain is Extracellular. Residue asparagine 65 is glycosylated (N-linked (GlcNAc...) asparagine). 2 cysteine pairs are disulfide-bonded: cysteine 169–cysteine 183 and cysteine 243–cysteine 244. The N-linked (GlcNAc...) asparagine glycan is linked to asparagine 254. The next 3 membrane-spanning stretches (helical) occupy residues 262 to 285 (LFYTVNLIIPCVGISYLSVLVFYL), 293 to 311 (IALCISILLSQTMFFLLIS), and 327 to 346 (YLLFTMLLVGLSVVITIIIL). Residues 347–526 (NIHYRKPSTH…WGFVAMVMDR (180 aa)) lie on the Cytoplasmic side of the membrane. A helical membrane pass occupies residues 527-545 (LFLWLFMIASLVGTFVILG). An N-linked (GlcNAc...) asparagine glycan is attached at asparagine 570.

Belongs to the ligand-gated ion channel (TC 1.A.9) family. Acetylcholine receptor (TC 1.A.9.1) subfamily. In terms of tissue distribution, CNS in embryos.

It is found in the postsynaptic cell membrane. Its subcellular location is the cell membrane. Its function is as follows. After binding acetylcholine, the AChR responds by an extensive change in conformation that affects all subunits and leads to opening of an ion-conducting channel across the plasma membrane. The chain is Acetylcholine receptor subunit alpha-like 2 (nAChRalpha2) from Drosophila melanogaster (Fruit fly).